Here is a 110-residue protein sequence, read N- to C-terminus: Class I hydrophobin 2 (110 aa).

The signal sequence occupies residues 1 to 17; sequence MQFKFLTTVALATLAVA. 4 disulfide bridges follow: Cys28-Cys89, Cys36-Cys83, Cys37-Cys71, and Cys90-Cys103. N-linked (GlcNAc...) asparagine glycosylation is present at Asn57.

This sequence belongs to the fungal hydrophobin family. Self-assembles to form functional amyloid fibrils called rodlets. Self-assembly into fibrillar rodlets occurs spontaneously at hydrophobic:hydrophilic interfaces and the rodlets further associate laterally to form amphipathic monolayers.

The protein resides in the secreted. It is found in the cell wall. Its function is as follows. Aerial growth, conidiation, and dispersal of filamentous fungi in the environment rely upon a capability of their secreting small amphipathic proteins called hydrophobins (HPBs) with low sequence identity. Class I can self-assemble into an outermost layer of rodlet bundles on aerial cell surfaces, conferring cellular hydrophobicity that supports fungal growth, development and dispersal; whereas Class II form highly ordered films at water-air interfaces through intermolecular interactions but contribute nothing to the rodlet structure. CoH2 is an asexual monokaryon-specific class I hydrophobin that is involved in aerial growth of mycelia. In Coprinopsis cinerea (Inky cap fungus), this protein is Class I hydrophobin 2.